Reading from the N-terminus, the 452-residue chain is Interferon-induced protein 44-like (452 aa).

Positions 1–159 (MEVTTRLTWN…YLECEVFRVE (159 aa)) constitute a TLDc domain.

Belongs to the IFI44 family. In terms of assembly, interacts with FKBP5; this interaction modulates IKBKB and IKBKE kinase activities.

The protein resides in the cytoplasm. Its function is as follows. Type I interferon-stimulated gene (ISG) that plays a critical role in antiviral and antibacterial activity. During bacterial infection, promotes macrophage differentiation and facilitates inflammatory cytokine secretion. Plays a role in the control of respiratory syncytial virus/RSV infection, reducing the ability of the virus to replicate. Exhibits a low antiviral activity against hepatitis C virus. Also acts as a feedback regulator of IFN responses by negatively regulating IKBKB and IKBKE kinase activities through interaction with FKBP5. The polypeptide is Interferon-induced protein 44-like (IFI44L) (Homo sapiens (Human)).